The primary structure comprises 215 residues: Cytokinin riboside 5'-monophosphate phosphoribohydrolase LOG4 (215 aa).

Substrate contacts are provided by residues Glu84, Arg102–Lys103, Gly119–Glu125, and Thr131.

The protein belongs to the LOG family. As to expression, expressed in roots and shoots. Detected in root procambium, lateral root primordia, vascular tissues of cotyledons, leaves and stems, shoot apical meristem, axillary buds, young inflorescences, fruit abscission zones and basal part of ovules.

The protein localises to the cytoplasm. It localises to the nucleus. It catalyses the reaction N(6)-(dimethylallyl)adenosine 5'-phosphate + H2O = N(6)-dimethylallyladenine + D-ribose 5-phosphate. The enzyme catalyses 9-ribosyl-trans-zeatin 5'-phosphate + H2O = trans-zeatin + D-ribose 5-phosphate. Cytokinin-activating enzyme working in the direct activation pathway. Phosphoribohydrolase that converts inactive cytokinin nucleotides to the biologically active free-base forms. The protein is Cytokinin riboside 5'-monophosphate phosphoribohydrolase LOG4 (LOG4) of Arabidopsis thaliana (Mouse-ear cress).